We begin with the raw amino-acid sequence, 382 residues long: Ribosomal RNA large subunit methyltransferase G (382 aa).

Belongs to the methyltransferase superfamily. RlmG family.

Its subcellular location is the cytoplasm. It carries out the reaction guanosine(1835) in 23S rRNA + S-adenosyl-L-methionine = N(2)-methylguanosine(1835) in 23S rRNA + S-adenosyl-L-homocysteine + H(+). Functionally, specifically methylates the guanine in position 1835 (m2G1835) of 23S rRNA. The chain is Ribosomal RNA large subunit methyltransferase G from Aliivibrio fischeri (strain ATCC 700601 / ES114) (Vibrio fischeri).